The primary structure comprises 386 residues: PqqA peptide cyclase (386 aa).

In terms of domain architecture, Radical SAM core spans Ser-9–Lys-228. Cys-23, Cys-27, and Cys-30 together coordinate [4Fe-4S] cluster.

This sequence belongs to the radical SAM superfamily. PqqE family. Interacts with PqqD. The interaction is necessary for activity of PqqE. The cofactor is [4Fe-4S] cluster.

It carries out the reaction [PQQ precursor protein] + S-adenosyl-L-methionine = E-Y cross-linked-[PQQ precursor protein] + 5'-deoxyadenosine + L-methionine + H(+). It participates in cofactor biosynthesis; pyrroloquinoline quinone biosynthesis. Catalyzes the cross-linking of a glutamate residue and a tyrosine residue in the PqqA protein as part of the biosynthesis of pyrroloquinoline quinone (PQQ). The protein is PqqA peptide cyclase of Acinetobacter baylyi (strain ATCC 33305 / BD413 / ADP1).